A 93-amino-acid polypeptide reads, in one-letter code: MTHTLHLVIHGRVQGVGYRAWCADEAVSRGLSGFVRNRREGTVEAVISGPSEAVAAMLEACRSGPAHAHVERIEEALAEAPPAGTGFRVAATV.

One can recognise an Acylphosphatase-like domain in the interval 4 to 91 (TLHLVIHGRV…PAGTGFRVAA (88 aa)). Residues Arg-19 and Asn-37 contribute to the active site.

This sequence belongs to the acylphosphatase family.

It carries out the reaction an acyl phosphate + H2O = a carboxylate + phosphate + H(+). This chain is Acylphosphatase (acyP), found in Azorhizobium caulinodans (strain ATCC 43989 / DSM 5975 / JCM 20966 / LMG 6465 / NBRC 14845 / NCIMB 13405 / ORS 571).